The primary structure comprises 353 residues: Trans-enoyl reductase eqxC (353 aa).

45 to 48 (VDTK) lines the NADP(+) pocket. 131–138 (ISFMTTGL) lines the substrate pocket. NADP(+)-binding positions include 166-169 (SSAT), 189-192 (SPRN), Tyr-207, and 254-255 (LE). 275 to 279 (GPQML) is a substrate binding site. Residue 344-345 (IS) participates in NADP(+) binding.

The protein belongs to the zinc-containing alcohol dehydrogenase family. As to quaternary structure, monomer.

The catalysed reaction is L-serine + 7 malonyl-CoA + acetyl-CoA + 2 S-adenosyl-L-methionine + ATP + 8 NADPH + 11 H(+) = (5S)-3-[(2E,6R,8E,10E,12E)-2,6-dimethyltetradeca-2,8,10,12-tetraenoyl]-5-(hydroxymethyl)pyrrolidine-2,4-dione + AMP + 2 S-adenosyl-L-homocysteine + 7 CO2 + diphosphate + 8 NADP(+) + 8 CoA + 6 H2O. It functions in the pathway mycotoxin biosynthesis. Its function is as follows. Trans-enoyl reductase; part of the gene cluster that mediates the biosynthesis of equisetin, a trans-fused decalin-containing tetramic acid with antimicrobial activity. The PKS module of eqxS together with the enoylreductase eqxC catalyze the formation of the polyketide unit which is then conjugated to L-serine by the condensation domain of the eqxS NRPS module. Activity of the Dieckmann cyclase domain (RED) results in release of the Dieckmann product intermediate. Diels-Alderase eqx3 is involved in endo-selective Diels-Alder cycloaddition to form the decalin ring, leading to the production of N-desmethylequisetin also called trichosetin. Subsequent N-methylation is carried out by eqxD to give equisetin. The sequence is that of Trans-enoyl reductase eqxC from Fusarium heterosporum.